Here is a 252-residue protein sequence, read N- to C-terminus: Ditrans,polycis-undecaprenyl-diphosphate synthase ((2E,6E)-farnesyl-diphosphate specific) (252 aa).

Aspartate 25 is a catalytic residue. Residue aspartate 25 coordinates Mg(2+). Substrate contacts are provided by residues 26–29, tryptophan 30, arginine 38, histidine 42, and 70–72; these read GNGR and SSE. The Proton acceptor role is filled by asparagine 73. Positions 74, 76, and 193 each coordinate substrate. Histidine 198 contacts Mg(2+). Residue 199 to 201 participates in substrate binding; that stretch reads RIS. Glutamate 212 is a Mg(2+) binding site.

Belongs to the UPP synthase family. Homodimer. Requires Mg(2+) as cofactor.

The enzyme catalyses 8 isopentenyl diphosphate + (2E,6E)-farnesyl diphosphate = di-trans,octa-cis-undecaprenyl diphosphate + 8 diphosphate. In terms of biological role, catalyzes the sequential condensation of isopentenyl diphosphate (IPP) with (2E,6E)-farnesyl diphosphate (E,E-FPP) to yield (2Z,6Z,10Z,14Z,18Z,22Z,26Z,30Z,34E,38E)-undecaprenyl diphosphate (di-trans,octa-cis-UPP). UPP is the precursor of glycosyl carrier lipid in the biosynthesis of bacterial cell wall polysaccharide components such as peptidoglycan and lipopolysaccharide. This Salmonella paratyphi A (strain ATCC 9150 / SARB42) protein is Ditrans,polycis-undecaprenyl-diphosphate synthase ((2E,6E)-farnesyl-diphosphate specific).